The following is a 293-amino-acid chain: Phosphate-binding protein PstS 2 (293 aa).

The N-terminal stretch at 1–23 is a signal peptide; that stretch reads MKKHKMLSLLAVSGLMGIGILAG. Cys-24 is lipidated: N-palmitoyl cysteine. Residue Cys-24 is the site of S-diacylglycerol cysteine attachment.

The protein belongs to the PstS family. As to quaternary structure, the complex is composed of two ATP-binding proteins (PstB), two transmembrane proteins (PstC and PstA) and a solute-binding protein (PstS).

The protein resides in the cell membrane. In terms of biological role, part of the ABC transporter complex PstSACB involved in phosphate import. The sequence is that of Phosphate-binding protein PstS 2 (pstS2) from Streptococcus agalactiae serotype III (strain NEM316).